The primary structure comprises 518 residues: GMP synthase [glutamine-hydrolyzing] (518 aa).

The Glutamine amidotransferase type-1 domain occupies 6–200 (RLLIIDFGSQ…FVRLAGFKGD (195 aa)). Catalysis depends on Cys84, which acts as the Nucleophile. Active-site residues include His175 and Glu177. In terms of domain architecture, GMPS ATP-PPase spans 201-393 (WTMGAYREEA…LGLPESFIGR (193 aa)). 228-234 (SGGVDSS) contacts ATP.

In terms of assembly, homodimer.

It catalyses the reaction XMP + L-glutamine + ATP + H2O = GMP + L-glutamate + AMP + diphosphate + 2 H(+). It participates in purine metabolism; GMP biosynthesis; GMP from XMP (L-Gln route): step 1/1. Catalyzes the synthesis of GMP from XMP. The protein is GMP synthase [glutamine-hydrolyzing] of Cereibacter sphaeroides (strain ATCC 17029 / ATH 2.4.9) (Rhodobacter sphaeroides).